We begin with the raw amino-acid sequence, 172 residues long: Keratin, high-sulfur matrix protein, B2A (172 aa).

Ala-2 carries the post-translational modification N-acetylalanine. 5 consecutive repeats follow at residues 27–36, 37–46, 47–56, 57–66, and 67–76; these read PTCCQTSCCQ, PTSIQTSCCQ, PISIQTSCCQ, and PTCLQTSGCE.

Functionally, the keratin products of mammalian epidermal derivatives such as wool and hair consist of microfibrils embedded in a rigid matrix of other proteins. The matrix proteins include the high-sulfur and high-tyrosine keratins, having molecular weights of 6-20 kDa, whereas the microfibrils contain the larger, low-sulfur keratins (40-56 kDa). This is Keratin, high-sulfur matrix protein, B2A from Ovis aries (Sheep).